Here is a 530-residue protein sequence, read N- to C-terminus: Probable serine/threonine-protein kinase fnkB (530 aa).

Residues 11 to 268 (WEIVETLKSN…SITLIDHPFL (258 aa)) form the Protein kinase domain. Residues 17 to 25 (LKSNVFKVN) and K43 each bind ATP. Residue D131 is the Proton acceptor of the active site.

It belongs to the protein kinase superfamily. STE Ser/Thr protein kinase family. Mg(2+) is required as a cofactor.

It carries out the reaction L-seryl-[protein] + ATP = O-phospho-L-seryl-[protein] + ADP + H(+). The enzyme catalyses L-threonyl-[protein] + ATP = O-phospho-L-threonyl-[protein] + ADP + H(+). The polypeptide is Probable serine/threonine-protein kinase fnkB (Dictyostelium discoideum (Social amoeba)).